The following is a 545-amino-acid chain: Chaperonin GroEL (545 aa).

ATP contacts are provided by residues 29–32 (TLGP), 86–90 (DGTTT), glycine 413, 476–478 (NAA), and aspartate 492.

This sequence belongs to the chaperonin (HSP60) family. Forms a cylinder of 14 subunits composed of two heptameric rings stacked back-to-back. Interacts with the co-chaperonin GroES.

The protein resides in the cytoplasm. It catalyses the reaction ATP + H2O + a folded polypeptide = ADP + phosphate + an unfolded polypeptide.. In terms of biological role, together with its co-chaperonin GroES, plays an essential role in assisting protein folding. The GroEL-GroES system forms a nano-cage that allows encapsulation of the non-native substrate proteins and provides a physical environment optimized to promote and accelerate protein folding. The polypeptide is Chaperonin GroEL (Shouchella clausii (strain KSM-K16) (Alkalihalobacillus clausii)).